Here is a 491-residue protein sequence, read N- to C-terminus: UDP-N-acetylmuramate--L-alanine ligase (491 aa).

126–132 (GTHGKTT) contributes to the ATP binding site.

The protein belongs to the MurCDEF family.

The protein localises to the cytoplasm. It catalyses the reaction UDP-N-acetyl-alpha-D-muramate + L-alanine + ATP = UDP-N-acetyl-alpha-D-muramoyl-L-alanine + ADP + phosphate + H(+). The protein operates within cell wall biogenesis; peptidoglycan biosynthesis. Functionally, cell wall formation. The sequence is that of UDP-N-acetylmuramate--L-alanine ligase from Salmonella agona (strain SL483).